The sequence spans 197 residues: ATP-dependent Clp protease proteolytic subunit (197 aa).

Ser98 acts as the Nucleophile in catalysis. Residue His123 is part of the active site.

It belongs to the peptidase S14 family. In terms of assembly, fourteen ClpP subunits assemble into 2 heptameric rings which stack back to back to give a disk-like structure with a central cavity, resembling the structure of eukaryotic proteasomes. Forms large heterooligomeric complexes consisting of an ATPase component (ClpX, ClpC or ClpE) and a proteolytic component (ClpP).

It localises to the cytoplasm. The catalysed reaction is Hydrolysis of proteins to small peptides in the presence of ATP and magnesium. alpha-casein is the usual test substrate. In the absence of ATP, only oligopeptides shorter than five residues are hydrolyzed (such as succinyl-Leu-Tyr-|-NHMec, and Leu-Tyr-Leu-|-Tyr-Trp, in which cleavage of the -Tyr-|-Leu- and -Tyr-|-Trp bonds also occurs).. Its activity is regulated as follows. Low intrinsic peptidase activity is stimulated by ATP-binding subunits ClpC, ClpE and ClpX. Activity is disregulated by acyldepsipeptides (ADEP) antibiotics, which negate the need for ATP-binding subunits for activation and which makes it into an unregulated protease. Each ClpP subunit binds 1 ADEP molecule, which prevents binding of ClpX. ADEP binding causes conformational shifts that open the gated pore of the ring. Protease activity is inhibited by diisopropylfluoro-phosphate. Protease activity is inhibited by bortezomib, an oncology drug originally designed to work on the human proteasome. Its function is as follows. Cleaves peptides in various proteins in a process that requires ATP hydrolysis. Has a limited peptidase activity in the absence of ATP-binding subunits ClpC, ClpE or ClpX. Has a chymotrypsin-like activity. Plays a major role in the degradation of misfolded proteins. ClpXP is involved in the complete degradation of the site-2 clipped anti-sigma-W factor RsiW. This results in the release of SigW and the transcriptional activation of genes under the control of the sigma-W factor. Probably the major protease that degrades proteins tagged by trans-translation. This is ATP-dependent Clp protease proteolytic subunit from Bacillus subtilis (strain 168).